The sequence spans 511 residues: 2,3-bisphosphoglycerate-independent phosphoglycerate mutase (511 aa).

Asp12 and Ser62 together coordinate Mn(2+). Ser62 functions as the Phosphoserine intermediate in the catalytic mechanism. Substrate contacts are provided by residues His123, 154–155, Arg181, Arg187, 252–255, and Lys335; these read RD and RPDR. Mn(2+) contacts are provided by Asp402, His406, Asp444, His445, and His462.

It belongs to the BPG-independent phosphoglycerate mutase family. As to quaternary structure, monomer. Requires Mn(2+) as cofactor.

The enzyme catalyses (2R)-2-phosphoglycerate = (2R)-3-phosphoglycerate. Its pathway is carbohydrate degradation; glycolysis; pyruvate from D-glyceraldehyde 3-phosphate: step 3/5. Functionally, catalyzes the interconversion of 2-phosphoglycerate and 3-phosphoglycerate. The sequence is that of 2,3-bisphosphoglycerate-independent phosphoglycerate mutase from Acholeplasma laidlawii (strain PG-8A).